The following is a 232-amino-acid chain: uncharacterized protein (232 aa).

A helical membrane pass occupies residues 10–32 (GLTIYLYPVIAWIILVTKIESGL).

It localises to the membrane. This is an uncharacterized protein from Archaeoglobus fulgidus (strain ATCC 49558 / DSM 4304 / JCM 9628 / NBRC 100126 / VC-16).